We begin with the raw amino-acid sequence, 189 residues long: Phosphomevalonate kinase (189 aa).

Residues 10–16 (KRKCGKD) and R138 each bind ATP. Substrate is bound at residue N168.

It is found in the cytoplasm. The protein localises to the cytosol. It catalyses the reaction (R)-5-phosphomevalonate + ATP = (R)-5-diphosphomevalonate + ADP. It participates in isoprenoid biosynthesis; isopentenyl diphosphate biosynthesis via mevalonate pathway; isopentenyl diphosphate from (R)-mevalonate: step 2/3. This is Phosphomevalonate kinase from Drosophila melanogaster (Fruit fly).